Consider the following 314-residue polypeptide: 4-hydroxy-3-methylbut-2-enyl diphosphate reductase (314 aa).

Residue cysteine 12 coordinates [4Fe-4S] cluster. Residues histidine 41 and histidine 74 each coordinate (2E)-4-hydroxy-3-methylbut-2-enyl diphosphate. Positions 41 and 74 each coordinate dimethylallyl diphosphate. Isopentenyl diphosphate-binding residues include histidine 41 and histidine 74. Cysteine 96 provides a ligand contact to [4Fe-4S] cluster. Histidine 124 serves as a coordination point for (2E)-4-hydroxy-3-methylbut-2-enyl diphosphate. Histidine 124 is a dimethylallyl diphosphate binding site. Residue histidine 124 coordinates isopentenyl diphosphate. The active-site Proton donor is glutamate 126. Position 167 (threonine 167) interacts with (2E)-4-hydroxy-3-methylbut-2-enyl diphosphate. Residue cysteine 197 participates in [4Fe-4S] cluster binding. (2E)-4-hydroxy-3-methylbut-2-enyl diphosphate-binding residues include serine 225, serine 226, asparagine 227, and serine 269. Dimethylallyl diphosphate contacts are provided by serine 225, serine 226, asparagine 227, and serine 269. Serine 225, serine 226, asparagine 227, and serine 269 together coordinate isopentenyl diphosphate.

The protein belongs to the IspH family. The cofactor is [4Fe-4S] cluster.

The catalysed reaction is isopentenyl diphosphate + 2 oxidized [2Fe-2S]-[ferredoxin] + H2O = (2E)-4-hydroxy-3-methylbut-2-enyl diphosphate + 2 reduced [2Fe-2S]-[ferredoxin] + 2 H(+). It catalyses the reaction dimethylallyl diphosphate + 2 oxidized [2Fe-2S]-[ferredoxin] + H2O = (2E)-4-hydroxy-3-methylbut-2-enyl diphosphate + 2 reduced [2Fe-2S]-[ferredoxin] + 2 H(+). The protein operates within isoprenoid biosynthesis; dimethylallyl diphosphate biosynthesis; dimethylallyl diphosphate from (2E)-4-hydroxy-3-methylbutenyl diphosphate: step 1/1. It participates in isoprenoid biosynthesis; isopentenyl diphosphate biosynthesis via DXP pathway; isopentenyl diphosphate from 1-deoxy-D-xylulose 5-phosphate: step 6/6. Its function is as follows. Catalyzes the conversion of 1-hydroxy-2-methyl-2-(E)-butenyl 4-diphosphate (HMBPP) into a mixture of isopentenyl diphosphate (IPP) and dimethylallyl diphosphate (DMAPP). Acts in the terminal step of the DOXP/MEP pathway for isoprenoid precursor biosynthesis. This is 4-hydroxy-3-methylbut-2-enyl diphosphate reductase from Aliivibrio fischeri (strain ATCC 700601 / ES114) (Vibrio fischeri).